Consider the following 421-residue polypeptide: Gamma-glutamyl phosphate reductase (421 aa).

Belongs to the gamma-glutamyl phosphate reductase family.

It is found in the cytoplasm. It carries out the reaction L-glutamate 5-semialdehyde + phosphate + NADP(+) = L-glutamyl 5-phosphate + NADPH + H(+). It participates in amino-acid biosynthesis; L-proline biosynthesis; L-glutamate 5-semialdehyde from L-glutamate: step 2/2. Functionally, catalyzes the NADPH-dependent reduction of L-glutamate 5-phosphate into L-glutamate 5-semialdehyde and phosphate. The product spontaneously undergoes cyclization to form 1-pyrroline-5-carboxylate. This is Gamma-glutamyl phosphate reductase from Pseudomonas paraeruginosa (strain DSM 24068 / PA7) (Pseudomonas aeruginosa (strain PA7)).